Here is a 4367-residue protein sequence, read N- to C-terminus: Dynein heavy chain, cytoplasmic (4367 aa).

Residues 1–13 are compositionally biased toward pro residues; sequence MMDSVPSPPPQPS. Residues 1 to 20 form a disordered region; that stretch reads MMDSVPSPPPQPSPDANGVA. A stem region spans residues 1–1904; the sequence is MMDSVPSPPP…HIKMANAKLN (1904 aa). Coiled coils occupy residues 676 to 693, 1176 to 1215, 1327 to 1351, 1557 to 1574, and 1637 to 1668; these read ARQI…VEQV, IKFA…EAVR, LTHF…KEAL, YKEF…LNRV, and NIPN…KERV. AAA regions lie at residues 1905 to 2130, 2202 to 2460, 2566 to 2815, and 2909 to 3179; these read YGFE…VLVS, EAIR…FTVA, EVNT…WVRG, and TFCE…QGKI. An ATP-binding site is contributed by 1943 to 1950; that stretch reads GPAGTGKT. Residues 2195–2218 adopt a coiled-coil conformation; the sequence is ASLEKLQEAIRRLAAERQLVVNDI. ATP-binding positions include 2240–2247, 2605–2612, and 2947–2954; these read GNSGSGKS, GPPGSGKT, and GVSGSGKT. Coiled coils occupy residues 3193-3296, 3423-3481, and 3778-3809; these read QYVK…LARA, PLRE…SRVQ, and VIET…VEQI. A stalk region spans residues 3193–3481; the sequence is QYVKLYNEKR…AIKAEMSRVQ (289 aa). AAA regions lie at residues 3565-3794 and 4003-4215; these read LSTA…EISA and AERF…VIDT.

This sequence belongs to the dynein heavy chain family. In terms of assembly, consists of at least two heavy chains and a number of intermediate and light chains.

The protein localises to the cytoplasm. It localises to the cytoskeleton. In terms of biological role, cytoplasmic dynein acts as a motor for the intracellular retrograde motility of vesicles and organelles along microtubules. Dynein has ATPase activity; the force-producing power stroke is thought to occur on release of ADP. Required to maintain uniform nuclear distribution in hyphae. This is Dynein heavy chain, cytoplasmic (ro-1) from Neurospora crassa (strain ATCC 24698 / 74-OR23-1A / CBS 708.71 / DSM 1257 / FGSC 987).